The primary structure comprises 390 residues: Cathepsin D (390 aa).

The propeptide at 1–44 (VIRIPLHKFTSIRRTMSEAAGXVXXLIAKGPISKYATGEPAVRQ) is activation peptide. Positions 59 to 385 (YYGEIGIGTP…DRDQNRVGLA (327 aa)) constitute a Peptidase A1 domain. Intrachain disulfides connect Cys71-Cys140 and Cys90-Cys97. Asp77 is a catalytic residue. N-linked (GlcNAc...) asparagine glycosylation is found at Asn114 and Asn241. Cys264 and Cys268 form a disulfide bridge. Asp273 is an active-site residue. An intrachain disulfide couples Cys307 to Cys344.

The protein belongs to the peptidase A1 family. Consists of a light chain and a heavy chain. Interacts with ADAM30; this leads to activation of CTSD. Interacts with GRN; stabilizes CTSD; increases its proteolytic activity. Post-translationally, N- and O-glycosylated. Undergoes proteolytic cleavage and activation by ADAM30.

The protein localises to the lysosome. It localises to the melanosome. The protein resides in the secreted. Its subcellular location is the extracellular space. The catalysed reaction is Specificity similar to, but narrower than, that of pepsin A. Does not cleave the 4-Gln-|-His-5 bond in B chain of insulin.. Its function is as follows. Acid protease active in intracellular protein breakdown. Plays a role in APP processing following cleavage and activation by ADAM30 which leads to APP degradation. The chain is Cathepsin D (CTSD) from Bos taurus (Bovine).